Consider the following 486-residue polypeptide: H2.0-like homeobox protein (486 aa).

2 disordered regions span residues 83-173 and 330-486; these read ASFQ…SSKD and KWRH…LGGL. Positions 125–135 are enriched in low complexity; the sequence is QQQQQQQQPQQ. Positions 276–335 form a DNA-binding region, homeobox; it reads RSWSRAVFSNLQRKGLEKRFEIQKYVTKPDRKQLAAMLGLTDAQVKVWFQNRRMKWRHSK. 2 stretches are compositionally biased toward basic and acidic residues: residues 334 to 349 and 363 to 372; these read SKEA…EAGE and EERSPSRSEG. Residues 373-383 are compositionally biased toward acidic residues; the sequence is EAESESSDPES. Positions 390–401 are enriched in basic and acidic residues; sequence DTERTEGTERSL. The span at 409 to 420 shows a compositional bias: low complexity; the sequence is ASAAGALLAASS. A compositionally biased stretch (gly residues) spans 421–440; that stretch reads GGSGGSGGGGGGGFNFGGLS. The span at 441–474 shows a compositional bias: low complexity; that stretch reads SGSTTSAGSSGSHSSGGASELLPAPQPSLSSAPK. Pro residues predominate over residues 475–486; sequence SPEPVPAPLGGL.

Belongs to the H2.0 homeobox family.

It localises to the nucleus. Transcription factor required for TBX21/T-bet-dependent maturation of Th1 cells as well as maintenance of Th1-specific gene expression. Involved in embryogenesis and hematopoiesis. This chain is H2.0-like homeobox protein (HLX), found in Bos taurus (Bovine).